Consider the following 469-residue polypeptide: Interstitial collagenase (469 aa).

The signal sequence occupies residues 1–19 (MHSFPPLLLLLFWGVVSHS). Positions 20–99 (FPATLETQEQ…PRCGVPDVAQ (80 aa)) are cleaved as a propeptide — activation peptide. Phosphoserine is present on Ser57. Residues 90–97 (PRCGVPDV) carry the Cysteine switch motif. Residue Cys92 coordinates Zn(2+). The segment at 98–276 (AQFVLTEGNP…VQPIGPQTPK (179 aa)) is metalloprotease. Asn120 carries N-linked (GlcNAc...) asparagine glycosylation. Ca(2+) is bound by residues Asp124 and Asp158. His168 and Asp170 together coordinate Zn(2+). Ca(2+) contacts are provided by Asp175, Gly176, Gly178, and Asn180. Zn(2+) is bound at residue His183. Residues Gly190, Gly192, and Asp194 each contribute to the Ca(2+) site. His196 serves as a coordination point for Zn(2+). Ca(2+) contacts are provided by Asp198, Glu199, and Glu201. His218 serves as a coordination point for Zn(2+). The active site involves Glu219. Zn(2+)-binding residues include His222 and His228. Thr274 carries the phosphothreonine modification. Hemopexin repeat units follow at residues 275–324 (PKAC…WPQL), 325–371 (PNGL…FGFP), 374–422 (VKHI…FPGI), and 423–466 (GHKV…WFNC). Cys278 and Cys466 form a disulfide bridge. 2 residues coordinate Ca(2+): Asp285 and Glu329. A Phosphotyrosine; by PKDCC modification is found at Tyr360. Positions 378 and 427 each coordinate Ca(2+).

The protein belongs to the peptidase M10A family. In terms of assembly, (Microbial infection) Interacts with HIV-1 Tat. It depends on Ca(2+) as a cofactor. Zn(2+) is required as a cofactor. In terms of processing, undergoes autolytic cleavage to two major forms (22 kDa and 27 kDa). A minor form (25 kDa) is the glycosylated form of the 22 kDa form. The 27 kDa form has no activity while the 22/25 kDa form can act as activator for collagenase. Tyrosine phosphorylated in platelets by PKDCC/VLK.

The protein localises to the secreted. It localises to the extracellular space. Its subcellular location is the extracellular matrix. It carries out the reaction Cleavage of the triple helix of collagen at about three-quarters of the length of the molecule from the N-terminus, at 775-Gly-|-Ile-776 in the alpha1(I) chain. Cleaves synthetic substrates and alpha-macroglobulins at bonds where P1' is a hydrophobic residue.. Its activity is regulated as follows. Can be activated without removal of the activation peptide. Functionally, cleaves collagens of types I, II, and III at one site in the helical domain. Also cleaves collagens of types VII and X. In case of HIV infection, interacts and cleaves the secreted viral Tat protein, leading to a decrease in neuronal Tat's mediated neurotoxicity. The protein is Interstitial collagenase (MMP1) of Homo sapiens (Human).